A 520-amino-acid chain; its full sequence is Bifunctional purine biosynthesis protein PurH (520 aa).

Residues 1–147 (MAKIGRALIS…KNNRDVTVVV (147 aa)) enclose the MGS-like domain.

Belongs to the PurH family.

The catalysed reaction is (6R)-10-formyltetrahydrofolate + 5-amino-1-(5-phospho-beta-D-ribosyl)imidazole-4-carboxamide = 5-formamido-1-(5-phospho-D-ribosyl)imidazole-4-carboxamide + (6S)-5,6,7,8-tetrahydrofolate. The enzyme catalyses IMP + H2O = 5-formamido-1-(5-phospho-D-ribosyl)imidazole-4-carboxamide. It functions in the pathway purine metabolism; IMP biosynthesis via de novo pathway; 5-formamido-1-(5-phospho-D-ribosyl)imidazole-4-carboxamide from 5-amino-1-(5-phospho-D-ribosyl)imidazole-4-carboxamide (10-formyl THF route): step 1/1. Its pathway is purine metabolism; IMP biosynthesis via de novo pathway; IMP from 5-formamido-1-(5-phospho-D-ribosyl)imidazole-4-carboxamide: step 1/1. The chain is Bifunctional purine biosynthesis protein PurH from Geobacter sp. (strain M21).